Consider the following 493-residue polypeptide: GTPase Der (493 aa).

The region spanning 3–166 (PVIALVGRPN…EALGIFPKDN (164 aa)) is the EngA-type G 1 domain. GTP-binding positions include 9–16 (GRPNVGKS), 56–60 (DTGGI), and 118–121 (NKVD). Positions 166–195 (NAEEEGEGEPASEEVAEGEEPTRIPGPSEK) are disordered. The span at 167–184 (AEEEGEGEPASEEVAEGE) shows a compositional bias: acidic residues. Residues 198–371 (IKIAIIGRPN…SVQESFRSAV (174 aa)) form the EngA-type G 2 domain. GTP is bound by residues 204-211 (GRPNVGKS), 251-255 (DTAGV), and 316-319 (NKWD). Residues 372 to 456 (TRWPTSRLTS…PIRIEYKGGE (85 aa)) enclose the KH-like domain. A compositionally biased stretch (basic and acidic residues) spans 454-463 (GGENPYEGKK). The interval 454–493 (GGENPYEGKKNSLTARQVNKKRRLMSHHKKAEKKKKDKRR) is disordered. Residues 471–493 (VNKKRRLMSHHKKAEKKKKDKRR) show a composition bias toward basic residues.

It belongs to the TRAFAC class TrmE-Era-EngA-EngB-Septin-like GTPase superfamily. EngA (Der) GTPase family. Associates with the 50S ribosomal subunit.

In terms of biological role, GTPase that plays an essential role in the late steps of ribosome biogenesis. This chain is GTPase Der, found in Pseudomonas aeruginosa (strain ATCC 15692 / DSM 22644 / CIP 104116 / JCM 14847 / LMG 12228 / 1C / PRS 101 / PAO1).